Consider the following 388-residue polypeptide: Methylthioribose-1-phosphate isomerase (388 aa).

The Proton donor role is filled by D252.

The protein belongs to the eIF-2B alpha/beta/delta subunits family. MtnA subfamily.

The protein localises to the cytoplasm. It localises to the nucleus. The enzyme catalyses 5-(methylsulfanyl)-alpha-D-ribose 1-phosphate = 5-(methylsulfanyl)-D-ribulose 1-phosphate. It participates in amino-acid biosynthesis; L-methionine biosynthesis via salvage pathway; L-methionine from S-methyl-5-thio-alpha-D-ribose 1-phosphate: step 1/6. Its function is as follows. Catalyzes the interconversion of methylthioribose-1-phosphate (MTR-1-P) into methylthioribulose-1-phosphate (MTRu-1-P). This is Methylthioribose-1-phosphate isomerase from Verticillium alfalfae (strain VaMs.102 / ATCC MYA-4576 / FGSC 10136) (Verticillium wilt of alfalfa).